We begin with the raw amino-acid sequence, 312 residues long: Olfactory receptor 6B2 (312 aa).

The Extracellular portion of the chain corresponds to 1–25; the sequence is MSGENVTKVSTFILVGLPTAPGLQY. N-linked (GlcNAc...) asparagine glycosylation occurs at N5. A helical transmembrane segment spans residues 26–46; the sequence is LLFLLFLLTYLFVLVENLAII. Topologically, residues 47–54 are cytoplasmic; it reads LIVWSSTS. A helical membrane pass occupies residues 55–75; sequence LHRPMYYFLSSMSFLEIWYVS. Residues 76 to 99 are Extracellular-facing; that stretch reads DITPKMLEGFLLQQKRISFVGCMT. C97 and C189 are disulfide-bonded. A helical membrane pass occupies residues 100–120; sequence QLYFFSSLVCTECVLLASMAY. Residues 121–139 lie on the Cytoplasmic side of the membrane; the sequence is DRYVAICHPLRYHVLVTPG. A helical transmembrane segment spans residues 140–160; sequence LCLQLVGFSFVSGFTISMIKV. The Extracellular segment spans residues 161 to 196; sequence CFISSVTFCGSNVLNHFFCDISPILKLACTDFSTAE. The chain crosses the membrane as a helical span at residues 197 to 217; it reads LVDFILAFIILVFPLLATILS. The Cytoplasmic segment spans residues 218 to 237; the sequence is YWHITLAVLRIPSATGCWRA. Residues 238–258 traverse the membrane as a helical segment; it reads FSTCASHLTVVTVFYTALLFM. Topologically, residues 259-271 are extracellular; it reads YVRPQAIDSQSSN. Residues 272–292 form a helical membrane-spanning segment; the sequence is KLISAVYTVVTPIINPLIYCL. At 293 to 312 the chain is on the cytoplasmic side; sequence RNKEFKDALKKALGLGQTSH.

Belongs to the G-protein coupled receptor 1 family.

Its subcellular location is the cell membrane. Its function is as follows. Odorant receptor. The protein is Olfactory receptor 6B2 (OR6B2) of Homo sapiens (Human).